A 151-amino-acid polypeptide reads, in one-letter code: Troponin C, isoallergen Bla g 6.0101 (151 aa).

EF-hand domains follow at residues 7–42, 43–78, 83–118, and 119–151; these read EQIQ…LGHR, LDDD…FLVE, AMQQ…LDDK, and ITAE…MTGE. The Ca(2+) site is built by Asp56, Asp58, Ser60, Glu62, and Glu67. Positions 132, 134, 136, 138, and 143 each coordinate Ca(2+).

This sequence belongs to the troponin C family.

Functionally, troponin is the central regulatory protein of striated muscle contraction. It consists of three components: Troponin-I (Tn-I) which is the inhibitor of actomyosin ATPase, Troponin-T (Tn-T) which contains the binding site for tropomyosin and Troponin-C (Tn-C). The binding of calcium to Tn-C abolishes the inhibitory action of Tn on actin filaments. The polypeptide is Troponin C, isoallergen Bla g 6.0101 (Blattella germanica (German cockroach)).